The primary structure comprises 858 residues: DNA mismatch repair protein MutS (858 aa).

An ATP-binding site is contributed by 600–607 (GPNMSGKS).

The protein belongs to the DNA mismatch repair MutS family.

In terms of biological role, this protein is involved in the repair of mismatches in DNA. It is possible that it carries out the mismatch recognition step. This protein has a weak ATPase activity. The chain is DNA mismatch repair protein MutS from Bacillus pumilus (strain SAFR-032).